The primary structure comprises 486 residues: FAD-dependent oxidoreductase domain-containing protein 1 (486 aa).

A helical transmembrane segment spans residues 62–82; that stretch reads EHSDVVIVGGGVLGLSVAYWL.

As to quaternary structure, associates with components of the mitochondrial respiratory chain complex I. FAD serves as cofactor.

The protein localises to the mitochondrion inner membrane. In terms of biological role, required for the assembly of the mitochondrial membrane respiratory chain NADH dehydrogenase (Complex I). Involved in mid-late stages of complex I assembly. The polypeptide is FAD-dependent oxidoreductase domain-containing protein 1 (Homo sapiens (Human)).